We begin with the raw amino-acid sequence, 230 residues long: Ribosomal RNA small subunit methyltransferase G (230 aa).

Residues Gly95, Phe100, 146 to 147, and Arg159 each bind S-adenosyl-L-methionine; that span reads GE.

It belongs to the methyltransferase superfamily. RNA methyltransferase RsmG family.

It is found in the cytoplasm. Functionally, specifically methylates the N7 position of a guanine in 16S rRNA. The sequence is that of Ribosomal RNA small subunit methyltransferase G from Parabacteroides distasonis (strain ATCC 8503 / DSM 20701 / CIP 104284 / JCM 5825 / NCTC 11152).